Consider the following 1286-residue polypeptide: ABC transporter B family member 4 (1286 aa).

The tract at residues 1-39 is disordered; the sequence is MASESGLNGDPNILEEVSETKRDKEEEEEVKKTEKKDEE. The segment covering 18–39 has biased composition (basic and acidic residues); sequence SETKRDKEEEEEVKKTEKKDEE. The helical transmembrane segment at 60 to 80 threads the bilayer; it reads FLLMILGTLGSIGNGLGFPLM. The 287-residue stretch at 63-349 folds into the ABC transmembrane type-1 1 domain; that stretch reads MILGTLGSIG…TSPCLSAFAA (287 aa). 2 N-linked (GlcNAc...) asparagine glycosylation sites follow: N94 and N97. 5 helical membrane-spanning segments follow: residues 109-129, 186-206, 208-228, 288-308, and 317-337; these read FVWLGIGTFAAAFLQLSGWMI, IQLLATFVGGFVIAFVRGWLL, LVMLSSIPLLVMAGALLAIVI, GLGLGTLFLVVFCSYALAVWY, and GYTGGQVLNIIIAVLTGSMSL. An ABC transporter 1 domain is found at 384–620; it reads IELKDVYFTY…PEGAYSQLIR (237 aa). ATP is bound at residue 419-426; it reads GQSGSGKS. 2 N-linked (GlcNAc...) asparagine glycosylation sites follow: N500 and N571. Positions 625-636 are enriched in basic and acidic residues; sequence KKSDENAAEEQK. The tract at residues 625-669 is disordered; sequence KKSDENAAEEQKMSSIESFKQSSLRKSSLGRSLSKGGSSRGNSSR. Over residues 646 to 669 the composition is skewed to low complexity; sequence SSLRKSSLGRSLSKGGSSRGNSSR. The N-linked (GlcNAc...) asparagine glycan is linked to N666. Position 671 is a phosphoserine (S671). An ABC transmembrane type-1 2 domain is found at 720 to 1007; the sequence is LILGSISAAA…SSSLSPDSSK (288 aa). The next 2 membrane-spanning stretches (helical) occupy residues 721–741 and 764–784; these read ILGSISAAANGVILPIFGILI and IIFMVLGFASIIAYPAQTFFF. Residues N816 and N846 are each glycosylated (N-linked (GlcNAc...) asparagine). 4 consecutive transmembrane segments (helical) span residues 850 to 870, 871 to 891, 942 to 962, and 976 to 996; these read ILAGLIIAFLACWQLAFVVLA, MLPLIALNGFLYMKFMKGFSA, GIVSGIGFGFSFFVLFSSYAA, and TTFDSVFRVFFALTMAAMAIS. The 238-residue stretch at 1042 to 1279 folds into the ABC transporter 2 domain; the sequence is IELRHVSFKY…KDGVYASLVQ (238 aa). Position 1077-1084 (1077-1084) interacts with ATP; it reads GESGSGKS. N-linked (GlcNAc...) asparagine glycosylation is found at N1131 and N1230.

It belongs to the ABC transporter superfamily. ABCB family. Multidrug resistance exporter (TC 3.A.1.201) subfamily. In terms of assembly, interacts with 1-naphthylphthalamic acid (NPA). Post-translationally, phosphorylation level varies significantly during early response to bacterial elicitor. In terms of tissue distribution, mostly expressed in roots, especially in the root elongation zone and lateral roots. In mature portion of the root, expressed in the epidermis and cortex. In the root elongation zone, confined to epidermis. In root tips, present in the root cap, S3 columella and epidermal cells.

Its subcellular location is the cell membrane. Functionally, auxin influx transporter that mediates the transport of auxin in roots. Contributes to the basipetal transport in hypocotyls and root tips by establishing an auxin uptake sink in the root cap. Confers sensitivity to 1-N-naphthylphthalamic acid (NPA). Regulates the root elongation, the initiation of lateral roots and the development of root hairs. Can transport IAA, indole-3-propionic acid, NPA syringic acid, vanillic acid and some auxin metabolites, but not 2,4-D and 1-naphthaleneacetic acid. The sequence is that of ABC transporter B family member 4 (ABCB4) from Arabidopsis thaliana (Mouse-ear cress).